The primary structure comprises 235 residues: Orotidine 5'-phosphate decarboxylase (235 aa).

Substrate is bound by residues Asp17, Lys39, 66–75 (DLKLHDIGNT), Thr121, Arg182, Gln191, Gly211, and Arg212. The Proton donor role is filled by Lys68.

It belongs to the OMP decarboxylase family. Type 1 subfamily. Homodimer.

It catalyses the reaction orotidine 5'-phosphate + H(+) = UMP + CO2. It functions in the pathway pyrimidine metabolism; UMP biosynthesis via de novo pathway; UMP from orotate: step 2/2. Functionally, catalyzes the decarboxylation of orotidine 5'-monophosphate (OMP) to uridine 5'-monophosphate (UMP). In Rhodopseudomonas palustris (strain BisB5), this protein is Orotidine 5'-phosphate decarboxylase.